A 110-amino-acid polypeptide reads, in one-letter code: Large ribosomal subunit protein uL22 (110 aa).

Residues 85 to 95 (RGTASKIRKPT) show a composition bias toward basic residues. A disordered region spans residues 85-110 (RGTASKIRKPTSHVMVEVSKAQKKEA).

This sequence belongs to the universal ribosomal protein uL22 family. Part of the 50S ribosomal subunit.

Its function is as follows. This protein binds specifically to 23S rRNA; its binding is stimulated by other ribosomal proteins, e.g. L4, L17, and L20. It is important during the early stages of 50S assembly. It makes multiple contacts with different domains of the 23S rRNA in the assembled 50S subunit and ribosome. The globular domain of the protein is located near the polypeptide exit tunnel on the outside of the subunit, while an extended beta-hairpin is found that lines the wall of the exit tunnel in the center of the 70S ribosome. This chain is Large ribosomal subunit protein uL22, found in Campylobacter curvus (strain 525.92).